A 676-amino-acid polypeptide reads, in one-letter code: Ribosome quality control complex subunit TCF25 (676 aa).

2 disordered regions span residues 1–59 (MSRR…VRVN) and 85–147 (LTDA…ENGL). A compositionally biased stretch (basic residues) spans 123-136 (GKLRKKKKKQKNKK). The residue at position 602 (Ser-602) is a Phosphoserine.

This sequence belongs to the TCF25 family. Component of the ribosome quality control complex (RQC), composed of the E3 ubiquitin ligase LTN1, TCF25 and NEMF associated with the 60S ribosomal subunit. Interacts (via C-terminus) with NFATC4; the interaction leads to suppresson of NFATC4 transcription factor activity and is reduced following stimulation with angiotensin-2. Interacts with XIAP. As to expression, in the embryo, widely expressed with highest levels in brain. In the adult, highest expression is found in the heart. Repressed in cardiac tissue of patients with heart failure (at protein level). mRNA levels in the heart are unchanged in patients with heart failure.

It localises to the nucleus. Its subcellular location is the cytoplasm. It is found in the cytosol. Its function is as follows. Component of the ribosome quality control complex (RQC), a ribosome-associated complex that mediates ubiquitination and extraction of incompletely synthesized nascent chains for proteasomal degradation. In the RQC complex, required to promote formation of 'Lys-48'-linked polyubiquitin chains during ubiquitination of incompletely synthesized proteins by LTN1. May negatively regulate the calcineurin-NFAT signaling cascade by suppressing the activity of transcription factor NFATC4. May play a role in cell death control. This is Ribosome quality control complex subunit TCF25 from Homo sapiens (Human).